The sequence spans 485 residues: MPAPSLSALAAQLAAKQVSSRELAQQYLDRIAALNPTINAFITVDPEKTLAEAAAADALIAGGAAGPLTGVPIAHKDIFCTDGWLTTCGSKMLANFVAPYDAHVIERCKAAGMPSLGKTNMDEFAMGSSNETSFFGAVKNPWNAGYVPGGSSGGAAACVAARMAPAATGTDTGGSIRQPAALCGITGLKPTYGLVSRYGMIAFASSLDQAGPMAPSAEDCARLLNVITGFDPKDSTSLEREKEDYTRDLDLPLTGLRVGLPCEFFAEGLNNEVAAAVDAAVNELKKLGATTVEISLANSRLAIPVYYVLAPAEASSNLSRFDGVRYGYRAPEYADLNDMYAKTRAQGFGAEVKRRIMIGTYVLSHGYYDAYYLQAQKIRRLIAHDFAEAFKTCDVILGPTAPGTAFKLGEKSDDPVEMYLNDLYTIPANLAGLPGMSLPCGFDSQGLPIGLQLVGDYFSEAKMLNVAHQYQRVTDWHARQPEALA.

Residues Lys-76 and Ser-151 each act as charge relay system in the active site. Ser-175 acts as the Acyl-ester intermediate in catalysis.

This sequence belongs to the amidase family. GatA subfamily. Heterotrimer of A, B and C subunits.

The catalysed reaction is L-glutamyl-tRNA(Gln) + L-glutamine + ATP + H2O = L-glutaminyl-tRNA(Gln) + L-glutamate + ADP + phosphate + H(+). Allows the formation of correctly charged Gln-tRNA(Gln) through the transamidation of misacylated Glu-tRNA(Gln) in organisms which lack glutaminyl-tRNA synthetase. The reaction takes place in the presence of glutamine and ATP through an activated gamma-phospho-Glu-tRNA(Gln). The chain is Glutamyl-tRNA(Gln) amidotransferase subunit A from Thiobacillus denitrificans (strain ATCC 25259 / T1).